The sequence spans 285 residues: Bifunctional protein FolD (285 aa).

Residues 165–167 (GRS) and Ser-190 contribute to the NADP(+) site.

This sequence belongs to the tetrahydrofolate dehydrogenase/cyclohydrolase family. As to quaternary structure, homodimer.

The catalysed reaction is (6R)-5,10-methylene-5,6,7,8-tetrahydrofolate + NADP(+) = (6R)-5,10-methenyltetrahydrofolate + NADPH. It carries out the reaction (6R)-5,10-methenyltetrahydrofolate + H2O = (6R)-10-formyltetrahydrofolate + H(+). It participates in one-carbon metabolism; tetrahydrofolate interconversion. Catalyzes the oxidation of 5,10-methylenetetrahydrofolate to 5,10-methenyltetrahydrofolate and then the hydrolysis of 5,10-methenyltetrahydrofolate to 10-formyltetrahydrofolate. The sequence is that of Bifunctional protein FolD from Burkholderia thailandensis (strain ATCC 700388 / DSM 13276 / CCUG 48851 / CIP 106301 / E264).